The sequence spans 425 residues: Kynurenine/alpha-aminoadipate aminotransferase, mitochondrial (425 aa).

Residues 1–29 (MNYARFITAASAARNPSPIRTMTDILSRG) constitute a mitochondrion transit peptide. Arginine 20 is a binding site for substrate. The residue at position 69 (lysine 69) is an N6-acetyllysine. Residues tyrosine 74 and tyrosine 142 each contribute to the substrate site. The residue at position 179 (lysine 179) is an N6-acetyllysine. The interval 181 to 208 (EDAKNPQKNTPKFLYTVPNGNNPTGNSL) is disordered. Over residues 198–208 (PNGNNPTGNSL) the composition is skewed to polar residues. Asparagine 202 contributes to the substrate binding site. The residue at position 263 (lysine 263) is an N6-(pyridoxal phosphate)lysine; alternate. Residues lysine 263, lysine 339, and lysine 367 each carry the N6-acetyllysine; alternate modification. 3 positions are modified to N6-succinyllysine; alternate: lysine 263, lysine 339, and lysine 367. Arginine 399 contacts substrate. Lysine 422 is modified (N6-acetyllysine).

Belongs to the class-I pyridoxal-phosphate-dependent aminotransferase family. As to quaternary structure, homodimer. It depends on pyridoxal 5'-phosphate as a cofactor. In terms of tissue distribution, higher expression in the liver. Also found in heart, brain, kidney, pancreas, prostate, testis and ovary.

It localises to the mitochondrion. The catalysed reaction is glycine + 2-oxoglutarate = glyoxylate + L-glutamate. It carries out the reaction L-kynurenine + 2-oxoglutarate = kynurenate + L-glutamate + H2O. It catalyses the reaction L-kynurenine + glyoxylate = kynurenate + glycine + H2O. The enzyme catalyses 3-hydroxy-L-kynurenine + glyoxylate = xanthurenate + glycine + H2O. The catalysed reaction is 2-oxohexanoate + L-kynurenine = L-2-aminohexanoate + kynurenate + H2O. It carries out the reaction 3-phenylpyruvate + L-kynurenine = kynurenate + L-phenylalanine + H2O. It catalyses the reaction 4-methylsulfanyl-2-oxobutanoate + L-kynurenine = kynurenate + L-methionine + H2O. The enzyme catalyses 2-oxo-3-sulfanylpropanoate + L-kynurenine = kynurenate + L-cysteine + H2O. The catalysed reaction is indole-3-pyruvate + L-kynurenine = kynurenate + L-tryptophan + H2O. It carries out the reaction 2-oxopentanoate + L-kynurenine = L-2-aminopentanoate + kynurenate + H2O. It catalyses the reaction 4-methyl-2-oxopentanoate + L-kynurenine = kynurenate + L-leucine + H2O. The enzyme catalyses L-2-aminoadipate + 2-oxoglutarate = 2-oxoadipate + L-glutamate. The catalysed reaction is glyoxylate + L-methionine = 4-methylsulfanyl-2-oxobutanoate + glycine. It carries out the reaction L-2-aminoadipate + glyoxylate = 2-oxoadipate + glycine. It catalyses the reaction L-tyrosine + glyoxylate = 3-(4-hydroxyphenyl)pyruvate + glycine. The enzyme catalyses glyoxylate + L-phenylalanine = 3-phenylpyruvate + glycine. The catalysed reaction is L-tryptophan + glyoxylate = indole-3-pyruvate + glycine. It carries out the reaction L-leucine + glyoxylate = 4-methyl-2-oxopentanoate + glycine. It catalyses the reaction 2-oxobutanoate + L-kynurenine = (2S)-2-aminobutanoate + kynurenate + H2O. The enzyme catalyses 2-oxoadipate + L-kynurenine = L-2-aminoadipate + kynurenate + H2O. The protein operates within amino-acid degradation; L-lysine degradation via saccharopine pathway; glutaryl-CoA from L-lysine: step 4/6. Its activity is regulated as follows. Kynurenine transaminase activity is competitively inhibited by aminoadipate, asparagine, glutamate, histidine, cysteine, lysine, 3-hydroxy-kynurenine and phenylalanine. Its function is as follows. Transaminase with broad substrate specificity. Has transaminase activity towards aminoadipate, kynurenine, methionine and glutamate. Shows activity also towards tryptophan, aspartate and hydroxykynurenine. Accepts a variety of oxo-acids as amino-group acceptors, with a preference for 2-oxoglutarate, 2-oxocaproic acid, phenylpyruvate and alpha-oxo-gamma-methiol butyric acid. Can also use glyoxylate as amino-group acceptor (in vitro). The sequence is that of Kynurenine/alpha-aminoadipate aminotransferase, mitochondrial from Homo sapiens (Human).